Reading from the N-terminus, the 415-residue chain is Probable glucuronosyltransferase Os03g0287800 (415 aa).

The Cytoplasmic portion of the chain corresponds to M1–K25. A helical; Signal-anchor for type II membrane protein membrane pass occupies residues A26 to A43. At P44 to C415 the chain is on the lumenal side. Residues N78, N165, N257, and N287 are each glycosylated (N-linked (GlcNAc...) asparagine).

Belongs to the glycosyltransferase 43 family.

The protein resides in the golgi apparatus membrane. Functionally, involved in the synthesis of glucuronoxylan hemicellulose in secondary cell walls. The protein is Probable glucuronosyltransferase Os03g0287800 of Oryza sativa subsp. japonica (Rice).